The chain runs to 156 residues: Ribonuclease H (156 aa).

The RNase H type-1 domain maps to 2 to 144 (SQFDVTVFTD…CDVLARAQAS (143 aa)). Residues aspartate 11, glutamate 49, aspartate 71, and aspartate 136 each contribute to the Mg(2+) site.

It belongs to the RNase H family. Monomer. It depends on Mg(2+) as a cofactor.

It is found in the cytoplasm. The catalysed reaction is Endonucleolytic cleavage to 5'-phosphomonoester.. Endonuclease that specifically degrades the RNA of RNA-DNA hybrids. The sequence is that of Ribonuclease H from Nitratidesulfovibrio vulgaris (strain ATCC 29579 / DSM 644 / CCUG 34227 / NCIMB 8303 / VKM B-1760 / Hildenborough) (Desulfovibrio vulgaris).